The chain runs to 552 residues: MAGUK p55 subfamily member 2 (552 aa).

2 L27 domains span residues 8-59 (SESA…EETK) and 60-118 (LEAV…YETP). Ser-42 carries the post-translational modification Phosphoserine. A Phosphothreonine modification is found at Thr-117. At Ser-121 the chain carries Phosphoserine. A PDZ domain is found at 140–219 (MVGIRKTAGE…SVILKILPSY (80 aa)). Residues 225–293 (PRQVFVKCHF…PSQLLEEKRK (69 aa)) form the SH3 domain. The region spanning 350 to 537 (RKTLVLIGAQ…TFRELQTAME (188 aa)) is the Guanylate kinase-like domain.

This sequence belongs to the MAGUK family. As to quaternary structure, can homomultimerise. Interacts with CACNG2. Interacts (via the SH3-Guanylate kinase-like sub-module) with DLG4/PSD95 and DLGAP1/GKAP. Interacts (via the PDZ domain) with CADM1 (via C-terminus). Interacts with KCNN2/SK2 (via N-terminal domain). Interacts with SRC. In terms of processing, phosphorylated by SRC. In terms of tissue distribution, expressed in pyramidal neurons of CA1 region of the hippocampus.

The protein resides in the cell projection. It localises to the dendrite. The protein localises to the postsynaptic density. It is found in the cytoplasm. Its subcellular location is the cytoskeleton. The protein resides in the membrane. Its function is as follows. Postsynaptic MAGUK scaffold protein that links CADM1 cell adhesion molecules to core components of the postsynaptic density. In CA1 pyramidal neurons, required for synaptic KCNN2-containing channel function and long-term potentiation expression. Seems to negatively regulate SRC function in epithelial cells. The sequence is that of MAGUK p55 subfamily member 2 from Mus musculus (Mouse).